The primary structure comprises 343 residues: Autoinducer 2 import system permease protein LsrC (343 aa).

9 consecutive transmembrane segments (helical) span residues 13 to 33 (FLAI…YLSF), 38 to 58 (MIFA…LVML), 61 to 81 (NIDV…GVAL), 92 to 112 (LFAL…VVGL), 114 to 134 (IPAI…MLLW), 154 to 174 (VALG…IGAW), 212 to 232 (INGM…GFVP), 251 to 271 (GISL…AFFL), and 283 to 303 (LPAW…LVLD). A disordered region spans residues 321–343 (RFQPGNKGGKHVTPFPKRKKEVA).

It belongs to the binding-protein-dependent transport system permease family. AraH/RbsC subfamily. As to quaternary structure, the complex is composed of two ATP-binding proteins (LsrA), two transmembrane proteins (LsrC and LsrD) and a solute-binding protein (LsrB).

The protein localises to the cell inner membrane. Its function is as follows. Part of the ABC transporter complex LsrABCD involved in autoinducer 2 (AI-2) import. Probably responsible for the translocation of the substrate across the membrane. In Enterobacter sp. (strain 638), this protein is Autoinducer 2 import system permease protein LsrC (lsrC).